The sequence spans 209 residues: Leukemia-associated protein 7 homolog (209 aa).

Residues 28–87 (WGWGDGPSAPGSPRGPDHVPIAQARRPGQLRTRRGLGRGSIGARGSPEAGGLRGAEGGAE) are disordered.

In Mus musculus (Mouse), this protein is Leukemia-associated protein 7 homolog (Dleu7).